The primary structure comprises 106 residues: Large ribosomal subunit protein eL30 (106 aa).

Belongs to the eukaryotic ribosomal protein eL30 family.

The chain is Large ribosomal subunit protein eL30 (rpl30e) from Sulfurisphaera tokodaii (strain DSM 16993 / JCM 10545 / NBRC 100140 / 7) (Sulfolobus tokodaii).